A 251-amino-acid chain; its full sequence is Adenosylcobinamide-GDP ribazoletransferase (251 aa).

Helical transmembrane passes span 29 to 49, 65 to 85, 110 to 130, 136 to 156, 175 to 195, and 198 to 218; these read FAGM…ILAV, SLLI…DGAM, AFGA…LCYL, LLIL…IVRY, AIDL…IARF, and LTVA…TGAW.

This sequence belongs to the CobS family. It depends on Mg(2+) as a cofactor.

Its subcellular location is the cell inner membrane. It catalyses the reaction alpha-ribazole + adenosylcob(III)inamide-GDP = adenosylcob(III)alamin + GMP + H(+). The enzyme catalyses alpha-ribazole 5'-phosphate + adenosylcob(III)inamide-GDP = adenosylcob(III)alamin 5'-phosphate + GMP + H(+). The protein operates within cofactor biosynthesis; adenosylcobalamin biosynthesis; adenosylcobalamin from cob(II)yrinate a,c-diamide: step 7/7. Joins adenosylcobinamide-GDP and alpha-ribazole to generate adenosylcobalamin (Ado-cobalamin). Also synthesizes adenosylcobalamin 5'-phosphate from adenosylcobinamide-GDP and alpha-ribazole 5'-phosphate. This is Adenosylcobinamide-GDP ribazoletransferase from Synechococcus elongatus (strain ATCC 33912 / PCC 7942 / FACHB-805) (Anacystis nidulans R2).